Here is a 572-residue protein sequence, read N- to C-terminus: Proline--tRNA ligase (572 aa).

Belongs to the class-II aminoacyl-tRNA synthetase family. ProS type 1 subfamily. As to quaternary structure, homodimer.

The protein resides in the cytoplasm. It carries out the reaction tRNA(Pro) + L-proline + ATP = L-prolyl-tRNA(Pro) + AMP + diphosphate. In terms of biological role, catalyzes the attachment of proline to tRNA(Pro) in a two-step reaction: proline is first activated by ATP to form Pro-AMP and then transferred to the acceptor end of tRNA(Pro). As ProRS can inadvertently accommodate and process non-cognate amino acids such as alanine and cysteine, to avoid such errors it has two additional distinct editing activities against alanine. One activity is designated as 'pretransfer' editing and involves the tRNA(Pro)-independent hydrolysis of activated Ala-AMP. The other activity is designated 'posttransfer' editing and involves deacylation of mischarged Ala-tRNA(Pro). The misacylated Cys-tRNA(Pro) is not edited by ProRS. The sequence is that of Proline--tRNA ligase from Salmonella dublin (strain CT_02021853).